The chain runs to 264 residues: S-adenosylmethionine decarboxylase proenzyme (264 aa).

Serine 112 functions as the Schiff-base intermediate with substrate; via pyruvic acid in the catalytic mechanism. Position 112 is a pyruvic acid (Ser); by autocatalysis (serine 112). Catalysis depends on histidine 117, which acts as the Proton acceptor; for processing activity. Cysteine 140 functions as the Proton donor; for catalytic activity in the catalytic mechanism.

The protein belongs to the prokaryotic AdoMetDC family. Type 2 subfamily. Heterooctamer of four alpha and four beta chains arranged as a tetramer of alpha/beta heterodimers. Pyruvate is required as a cofactor. Post-translationally, is synthesized initially as an inactive proenzyme. Formation of the active enzyme involves a self-maturation process in which the active site pyruvoyl group is generated from an internal serine residue via an autocatalytic post-translational modification. Two non-identical subunits are generated from the proenzyme in this reaction, and the pyruvate is formed at the N-terminus of the alpha chain, which is derived from the carboxyl end of the proenzyme. The post-translation cleavage follows an unusual pathway, termed non-hydrolytic serinolysis, in which the side chain hydroxyl group of the serine supplies its oxygen atom to form the C-terminus of the beta chain, while the remainder of the serine residue undergoes an oxidative deamination to produce ammonia and the pyruvoyl group blocking the N-terminus of the alpha chain.

It catalyses the reaction S-adenosyl-L-methionine + H(+) = S-adenosyl 3-(methylsulfanyl)propylamine + CO2. Its pathway is amine and polyamine biosynthesis; S-adenosylmethioninamine biosynthesis; S-adenosylmethioninamine from S-adenosyl-L-methionine: step 1/1. Catalyzes the decarboxylation of S-adenosylmethionine to S-adenosylmethioninamine (dcAdoMet), the propylamine donor required for the synthesis of the polyamines spermine and spermidine from the diamine putrescine. In Yersinia pseudotuberculosis serotype O:1b (strain IP 31758), this protein is S-adenosylmethionine decarboxylase proenzyme.